Here is a 488-residue protein sequence, read N- to C-terminus: UDP-N-acetylmuramate--L-alanine ligase (488 aa).

Position 127–133 (127–133 (GTHGKTT)) interacts with ATP.

This sequence belongs to the MurCDEF family.

It is found in the cytoplasm. The enzyme catalyses UDP-N-acetyl-alpha-D-muramate + L-alanine + ATP = UDP-N-acetyl-alpha-D-muramoyl-L-alanine + ADP + phosphate + H(+). It functions in the pathway cell wall biogenesis; peptidoglycan biosynthesis. Cell wall formation. This chain is UDP-N-acetylmuramate--L-alanine ligase, found in Shewanella oneidensis (strain ATCC 700550 / JCM 31522 / CIP 106686 / LMG 19005 / NCIMB 14063 / MR-1).